Here is a 685-residue protein sequence, read N- to C-terminus: ATP-dependent RNA helicase MSS116, mitochondrial (685 aa).

The N-terminal 34 residues, Met-1–Asn-34, are a transit peptide targeting the mitochondrion. The disordered stretch occupies residues Ser-42 to Asp-107. The segment covering Ser-58–Ser-69 has biased composition (low complexity). Basic and acidic residues predominate over residues Ser-70–Asn-86. A compositionally biased stretch (low complexity) spans Arg-88–Asn-99. The short motif at Ser-138–Gln-166 is the Q motif element. The 188-residue stretch at Lys-170 to Leu-357 folds into the Helicase ATP-binding domain. Ala-183–Thr-190 lines the ATP pocket. A DEAD box motif is present at residues Asp-298–Asp-301. The region spanning Ser-386–Asn-542 is the Helicase C-terminal domain. The disordered stretch occupies residues Asp-633 to Asp-685. Residues Ser-644–Ser-658 show a composition bias toward low complexity.

This sequence belongs to the DEAD box helicase family. DDX18/HAS1 subfamily.

It is found in the mitochondrion matrix. It catalyses the reaction ATP + H2O = ADP + phosphate + H(+). In terms of biological role, ATP-dependent RNA helicase required for mitochondrial splicing of group I and II introns. Also required for efficient mitochondrial translation. The polypeptide is ATP-dependent RNA helicase MSS116, mitochondrial (MSS116) (Kluyveromyces lactis (strain ATCC 8585 / CBS 2359 / DSM 70799 / NBRC 1267 / NRRL Y-1140 / WM37) (Yeast)).